Here is a 67-residue protein sequence, read N- to C-terminus: MPKMKTKSSAKKRFKITASGKVKVAAAGKRHGMIKRSNKFIRDARGTMVLSEQDAKKVIQHYLPNGL.

This sequence belongs to the bacterial ribosomal protein bL35 family.

The sequence is that of Large ribosomal subunit protein bL35 from Bartonella henselae (strain ATCC 49882 / DSM 28221 / CCUG 30454 / Houston 1) (Rochalimaea henselae).